The primary structure comprises 289 residues: Glycerol facilitator-aquaporin gla (289 aa).

2 helical membrane passes run 10 to 30 (ITEF…VANV) and 41 to 61 (SWMI…VAFG). Positions 68–70 (NPA) match the NPA 1 motif. 3 helical membrane passes run 87–107 (AQYI…IVMV), 151–171 (FLGS…FFGS), and 209–229 (MIAH…LGGP). The NPA 2 motif lies at 235 to 237 (NPA). Residues 264–284 (WYAWVPVLAPILASLAAVALF) traverse the membrane as a helical segment.

The protein belongs to the MIP/aquaporin (TC 1.A.8) family.

The protein resides in the cell membrane. Its function is as follows. Mixed channel protein that transports both water and glycerol. In Lactococcus lactis subsp. cremoris (Streptococcus cremoris), this protein is Glycerol facilitator-aquaporin gla (gla).